Reading from the N-terminus, the 513-residue chain is NAD(P)H-quinone oxidoreductase subunit 2 (513 aa).

14 helical membrane passes run 12–32 (TLWP…VDLI), 41–61 (LPYL…PMWI), 77–97 (LSVV…LMSV), 104–124 (SLAT…AMLL), 130–150 (MAMI…LSGY), 165–185 (LLIG…LYGF), 199–219 (IVNL…GICF), 238–258 (PTPV…ALAI), 272–292 (WQTL…VVAI), 300–320 (MLAY…AIGT), 328–348 (ILYI…VVLF), 372–392 (LVLS…GFFG), 394–414 (LYLF…FGLV), and 456–476 (AGML…PPLI). Positions 494-505 (TATPVSRVSTGA) are enriched in polar residues. The tract at residues 494–513 (TATPVSRVSTGAQAPADHGR) is disordered.

It belongs to the complex I subunit 2 family. NDH-1 can be composed of about 15 different subunits; different subcomplexes with different compositions have been identified which probably have different functions.

The protein localises to the cell inner membrane. It catalyses the reaction a plastoquinone + NADH + (n+1) H(+)(in) = a plastoquinol + NAD(+) + n H(+)(out). It carries out the reaction a plastoquinone + NADPH + (n+1) H(+)(in) = a plastoquinol + NADP(+) + n H(+)(out). Its function is as follows. NDH-1 shuttles electrons from an unknown electron donor, via FMN and iron-sulfur (Fe-S) centers, to quinones in the respiratory and/or the photosynthetic chain. The immediate electron acceptor for the enzyme in this species is believed to be plastoquinone. Couples the redox reaction to proton translocation, and thus conserves the redox energy in a proton gradient. Cyanobacterial NDH-1 also plays a role in inorganic carbon-concentration. The protein is NAD(P)H-quinone oxidoreductase subunit 2 of Gloeobacter violaceus (strain ATCC 29082 / PCC 7421).